We begin with the raw amino-acid sequence, 174 residues long: MTNISVIAKPYAKAAFEFANEHNLLQQWSKLLQTFSELIKDKSVAAIVSSPTISQIEVVDALKKQLDENFFNFLALIAENKKMLIMPEIADQFESIKNIHNNVRVADVTLAYATDKNILDSLKTSLEKKFGCTIDMHINIDPAIIGGAVVKVGDTVIDSSVSGHLEKLKSILLS.

This sequence belongs to the ATPase delta chain family. In terms of assembly, F-type ATPases have 2 components, F(1) - the catalytic core - and F(0) - the membrane proton channel. F(1) has five subunits: alpha(3), beta(3), gamma(1), delta(1), epsilon(1). F(0) has three main subunits: a(1), b(2) and c(10-14). The alpha and beta chains form an alternating ring which encloses part of the gamma chain. F(1) is attached to F(0) by a central stalk formed by the gamma and epsilon chains, while a peripheral stalk is formed by the delta and b chains.

The protein resides in the cell inner membrane. F(1)F(0) ATP synthase produces ATP from ADP in the presence of a proton or sodium gradient. F-type ATPases consist of two structural domains, F(1) containing the extramembraneous catalytic core and F(0) containing the membrane proton channel, linked together by a central stalk and a peripheral stalk. During catalysis, ATP synthesis in the catalytic domain of F(1) is coupled via a rotary mechanism of the central stalk subunits to proton translocation. In terms of biological role, this protein is part of the stalk that links CF(0) to CF(1). It either transmits conformational changes from CF(0) to CF(1) or is implicated in proton conduction. This Francisella tularensis subsp. tularensis (strain FSC 198) protein is ATP synthase subunit delta.